The following is a 316-amino-acid chain: Serpentine receptor class gamma-8 (316 aa).

7 helical membrane passes run 28-48 (FVQV…LYVV), 60-80 (PFFM…IFIT), 106-126 (LYYP…IFLT), 147-167 (FSRI…NTII), 186-206 (IIPW…VVMI), 235-255 (ACAA…MKVL), and 267-287 (LVQP…MIFA).

The protein belongs to the nematode receptor-like protein srg family.

The protein localises to the membrane. The protein is Serpentine receptor class gamma-8 (srg-8) of Caenorhabditis elegans.